A 511-amino-acid polypeptide reads, in one-letter code: Spermatogenesis-associated protein 2 (511 aa).

The 73-residue stretch at 77-149 folds into the PUB domain; it reads ALHCAFSMLE…AYKLKELVES (73 aa). The PIM motif motif lies at 320-337; the sequence is TYFPTQDDVDLYTDSEPR.

This sequence belongs to the SPATA2 family. In terms of assembly, interacts (via the PIM motif) with RNF31/HOIP (via the PUB domain); the interaction is direct. Interacts (via the PUB domain) with CYLD; the interaction is direct. As to expression, expressed in the testis and to a lesser extent in the brain, while skeletal muscle and kidney show weak expression.

The protein resides in the cytoplasm. The protein localises to the nucleus. Bridging factor that mediates the recruitment of CYLD to the LUBAC complex, thereby regulating TNF-alpha-induced necroptosis. Acts as a direct binding intermediate that bridges RNF31/HOIP, the catalytic subunit of the LUBAC complex, and the deubiquitinase (CYLD), thereby recruiting CYLD to the TNF-R1 signaling complex (TNF-RSC). Required to activate the 'Met-1'- (linear) and 'Lys-63'-linked deubiquitinase activities of CYLD. Controls the kinase activity of RIPK1 and TNF-alpha-induced necroptosis by promoting 'Met-1'-linked deubiquitination of RIPK1 by CYLD. This chain is Spermatogenesis-associated protein 2, found in Rattus norvegicus (Rat).